A 180-amino-acid polypeptide reads, in one-letter code: Large ribosomal subunit protein uL5 (180 aa).

The protein belongs to the universal ribosomal protein uL5 family. As to quaternary structure, part of the 50S ribosomal subunit; part of the 5S rRNA/L5/L18/L25 subcomplex. Contacts the 5S rRNA and the P site tRNA. Forms a bridge to the 30S subunit in the 70S ribosome.

Functionally, this is one of the proteins that bind and probably mediate the attachment of the 5S RNA into the large ribosomal subunit, where it forms part of the central protuberance. In the 70S ribosome it contacts protein S13 of the 30S subunit (bridge B1b), connecting the 2 subunits; this bridge is implicated in subunit movement. Contacts the P site tRNA; the 5S rRNA and some of its associated proteins might help stabilize positioning of ribosome-bound tRNAs. The chain is Large ribosomal subunit protein uL5 from Pediococcus pentosaceus (strain ATCC 25745 / CCUG 21536 / LMG 10740 / 183-1w).